The sequence spans 389 residues: Liposome tubulation protein MamY (389 aa).

Residues 1 to 31 (MAIAAIMGDVLMLMGFNKAAFGKLNSASRAA) lie on the Cytoplasmic side of the membrane. A helical membrane pass occupies residues 32-52 (LIGAVIWAVLSIVYLTIFNGW). Over 53-62 (KNLFTMLPHE) the chain is Lumenal. The chain crosses the membrane as a helical span at residues 63–83 (FFIVLLSIALPIGLTVLILML). Residues 84 to 389 (SRIVKSVDTL…TETAPDSGMD (306 aa)) lie on the Cytoplasmic side of the membrane.

This sequence belongs to the magnetosome MamY family.

Its subcellular location is the magnetosome membrane. In terms of biological role, causes tubulation when added to magnetosome-derived liposomes, binds liposomes; may be involved in constriction of the cell inner membrane to form mature magnetosomes. Binds preferentially to cardiolipin, a component of bacterial membranes, with very poor to no binding of other tested (phospho)lipids. Addition of cardiolipin to magnetosome-derived lipids increases tubulation. May function with MamX, MamZ amd Mms6. This chain is Liposome tubulation protein MamY, found in Paramagnetospirillum magneticum (strain ATCC 700264 / AMB-1) (Magnetospirillum magneticum).